Reading from the N-terminus, the 521-residue chain is Probable protein kinase UbiB (521 aa).

The 379-residue stretch at Q119–T497 folds into the Protein kinase domain. Residues I125–V133 and K151 contribute to the ATP site. D286 serves as the catalytic Proton acceptor. The chain crosses the membrane as a helical span at residues Q496–V516.

This sequence belongs to the ABC1 family. UbiB subfamily.

Its subcellular location is the cell inner membrane. It participates in cofactor biosynthesis; ubiquinone biosynthesis [regulation]. In terms of biological role, is probably a protein kinase regulator of UbiI activity which is involved in aerobic coenzyme Q (ubiquinone) biosynthesis. This chain is Probable protein kinase UbiB, found in Variovorax paradoxus (strain S110).